Reading from the N-terminus, the 180-residue chain is UPF0743 protein C215.06c (180 aa).

C2HC LYAR-type zinc fingers lie at residues 1–26 (MVSFCCEVCQDIIKKPKLDQHRSRCH) and 27–51 (GAYFTCIDCNTTFERTDYRNHTSCM). The Zn(2+) site is built by Cys6, Cys9, His21, Cys25, Cys32, Cys35, His47, and Cys50. Positions 61–125 (LYRPTKKELK…KETVSSPAEQ (65 aa)) are disordered. Polar residues predominate over residues 77–95 (NAVNSKELSPNTDNQNTPA). A Phosphoserine modification is found at Ser85. Over residues 100-111 (HSLDENEKDKEN) the composition is skewed to basic and acidic residues.

It belongs to the UPF0743 family.

The protein resides in the nucleus. The protein is UPF0743 protein C215.06c of Schizosaccharomyces pombe (strain 972 / ATCC 24843) (Fission yeast).